The chain runs to 171 residues: Putative auxin-responsive protein IAA29 (171 aa).

In terms of domain architecture, PB1 spans 19-114 (SRFVKVFMHG…TVKKIYIVPA (96 aa)). The interval 117 to 171 (QNENDYQEEEEDNAAAAATADEDGDGAAADDGVAAAADDVDDVAGYTSNDDPSFD) is disordered. Residues 142–153 (GAAADDGVAAAA) are compositionally biased toward low complexity. Over residues 162 to 171 (YTSNDDPSFD) the composition is skewed to polar residues.

It belongs to the Aux/IAA family. In terms of assembly, homodimers and heterodimers.

It is found in the nucleus. In terms of biological role, aux/IAA proteins are short-lived transcriptional factors that function as repressors of early auxin response genes at low auxin concentrations. This Oryza sativa subsp. japonica (Rice) protein is Putative auxin-responsive protein IAA29 (IAA29).